A 273-amino-acid chain; its full sequence is Putative phosphoenolpyruvate synthase regulatory protein (273 aa).

An ADP-binding site is contributed by 153–160 (GVSRSGKT).

It belongs to the pyruvate, phosphate/water dikinase regulatory protein family. PSRP subfamily.

The enzyme catalyses [pyruvate, water dikinase] + ADP = [pyruvate, water dikinase]-phosphate + AMP + H(+). The catalysed reaction is [pyruvate, water dikinase]-phosphate + phosphate + H(+) = [pyruvate, water dikinase] + diphosphate. Its function is as follows. Bifunctional serine/threonine kinase and phosphorylase involved in the regulation of the phosphoenolpyruvate synthase (PEPS) by catalyzing its phosphorylation/dephosphorylation. This chain is Putative phosphoenolpyruvate synthase regulatory protein, found in Variovorax paradoxus (strain S110).